The sequence spans 400 residues: Glycine betaine/proline betaine transport system ATP-binding protein ProV (400 aa).

In terms of domain architecture, ABC transporter spans leucine 29–phenylalanine 265. Residue glycine 61–serine 68 coordinates ATP. CBS domains are found at residues alanine 280–alanine 341 and leucine 343–glycine 400.

It belongs to the ABC transporter superfamily. As to quaternary structure, the complex is composed of two ATP-binding proteins (ProV), two transmembrane proteins (ProW) and a solute-binding protein (ProX).

Its subcellular location is the cell inner membrane. Its function is as follows. Part of the ProU ABC transporter complex involved in glycine betaine and proline betaine uptake. Probably responsible for energy coupling to the transport system. The polypeptide is Glycine betaine/proline betaine transport system ATP-binding protein ProV (Salmonella typhimurium (strain LT2 / SGSC1412 / ATCC 700720)).